Consider the following 103-residue polypeptide: Small ribosomal subunit protein uS10 (103 aa).

The segment at 35–59 (LSGPVPLPTKTLEVPSRKSPDGEGT) is disordered.

It belongs to the universal ribosomal protein uS10 family. As to quaternary structure, part of the 30S ribosomal subunit.

In terms of biological role, involved in the binding of tRNA to the ribosomes. This Haloarcula marismortui (strain ATCC 43049 / DSM 3752 / JCM 8966 / VKM B-1809) (Halobacterium marismortui) protein is Small ribosomal subunit protein uS10 (rps10).